Consider the following 147-residue polypeptide: MVHLTAEEKAAVTALWGKVDVEDVGGEALGRLLVVYPWTQRFFDSFGDLSTPAAVMSNAKVKAHGKKVLNAFSDGMAHLDNLKGTFAKLSELHCDKLHVDPENFRLLGNVLVCVLAHHFGKEFTPQVQAAYQKVVAGVATALAHKYH.

Val-2 carries the N-acetylvaline modification. A Globin domain is found at 3-147 (HLTAEEKAAV…VATALAHKYH (145 aa)). Thr-13 is subject to Phosphothreonine. Ser-45 is subject to Phosphoserine. Residue Lys-60 is modified to N6-acetyllysine. His-64 contributes to the heme b binding site. At Lys-83 the chain carries N6-acetyllysine. A heme b-binding site is contributed by His-93. Cys-94 is subject to S-nitrosocysteine. Lys-145 bears the N6-acetyllysine mark.

It belongs to the globin family. In terms of assembly, heterotetramer of two alpha chains and two beta chains. In terms of tissue distribution, red blood cells.

Functionally, involved in oxygen transport from the lung to the various peripheral tissues. The protein is Hemoglobin subunit beta (HBB) of Carlito syrichta (Philippine tarsier).